The following is a 473-amino-acid chain: Photosystem II CP43 reaction center protein (473 aa).

A propeptide spanning residues 1–14 (MKTLYSPRRFYPVE) is cleaved from the precursor. T15 is subject to N-acetylthreonine. Residue T15 is modified to Phosphothreonine. 5 consecutive transmembrane segments (helical) span residues 69–93 (LFEV…PHLA), 134–155 (LLGP…KDRN), 178–200 (KALY…RKIS), 255–275 (KPFA…LSYS), and 291–312 (WFNN…ASQA). E367 provides a ligand contact to [CaMn4O5] cluster. The chain crosses the membrane as a helical span at residues 447–471 (RARAAAAGFEKGIDRDLEPVLFMTP).

The protein belongs to the PsbB/PsbC family. PsbC subfamily. PSII is composed of 1 copy each of membrane proteins PsbA, PsbB, PsbC, PsbD, PsbE, PsbF, PsbH, PsbI, PsbJ, PsbK, PsbL, PsbM, PsbT, PsbX, PsbY, PsbZ, Psb30/Ycf12, at least 3 peripheral proteins of the oxygen-evolving complex and a large number of cofactors. It forms dimeric complexes. Binds multiple chlorophylls and provides some of the ligands for the Ca-4Mn-5O cluster of the oxygen-evolving complex. It may also provide a ligand for a Cl- that is required for oxygen evolution. PSII binds additional chlorophylls, carotenoids and specific lipids. is required as a cofactor.

The protein resides in the plastid. The protein localises to the chloroplast thylakoid membrane. Its function is as follows. One of the components of the core complex of photosystem II (PSII). It binds chlorophyll and helps catalyze the primary light-induced photochemical processes of PSII. PSII is a light-driven water:plastoquinone oxidoreductase, using light energy to abstract electrons from H(2)O, generating O(2) and a proton gradient subsequently used for ATP formation. The sequence is that of Photosystem II CP43 reaction center protein from Ranunculus macranthus (Large buttercup).